Reading from the N-terminus, the 207-residue chain is Large ribosomal subunit protein uL3 (207 aa).

The protein belongs to the universal ribosomal protein uL3 family. Part of the 50S ribosomal subunit. Forms a cluster with proteins L14 and L19.

Functionally, one of the primary rRNA binding proteins, it binds directly near the 3'-end of the 23S rRNA, where it nucleates assembly of the 50S subunit. The chain is Large ribosomal subunit protein uL3 from Desulforapulum autotrophicum (strain ATCC 43914 / DSM 3382 / VKM B-1955 / HRM2) (Desulfobacterium autotrophicum).